We begin with the raw amino-acid sequence, 313 residues long: Holliday junction branch migration complex subunit RuvB (313 aa).

The interval 1 to 157 (MNEYIGQGNI…FGLIMELDFY (157 aa)) is large ATPase domain (RuvB-L). ATP contacts are provided by residues Gly-38, Lys-41, Thr-42, Thr-43, 104-106 (EDF), Arg-147, Tyr-157, and Arg-194. Thr-42 provides a ligand contact to Mg(2+). The small ATPAse domain (RuvB-S) stretch occupies residues 158–228 (SIDELSKIIE…MVEEIMFLLG (71 aa)). Positions 231 to 313 (KEGLDELDRK…KVQRGLFDEE (83 aa)) are head domain (RuvB-H). Positions 286 and 291 each coordinate DNA.

Belongs to the RuvB family. In terms of assembly, homohexamer. Forms an RuvA(8)-RuvB(12)-Holliday junction (HJ) complex. HJ DNA is sandwiched between 2 RuvA tetramers; dsDNA enters through RuvA and exits via RuvB. An RuvB hexamer assembles on each DNA strand where it exits the tetramer. Each RuvB hexamer is contacted by two RuvA subunits (via domain III) on 2 adjacent RuvB subunits; this complex drives branch migration. In the full resolvosome a probable DNA-RuvA(4)-RuvB(12)-RuvC(2) complex forms which resolves the HJ.

The protein localises to the cytoplasm. The enzyme catalyses ATP + H2O = ADP + phosphate + H(+). The RuvA-RuvB-RuvC complex processes Holliday junction (HJ) DNA during genetic recombination and DNA repair, while the RuvA-RuvB complex plays an important role in the rescue of blocked DNA replication forks via replication fork reversal (RFR). RuvA specifically binds to HJ cruciform DNA, conferring on it an open structure. The RuvB hexamer acts as an ATP-dependent pump, pulling dsDNA into and through the RuvAB complex. RuvB forms 2 homohexamers on either side of HJ DNA bound by 1 or 2 RuvA tetramers; 4 subunits per hexamer contact DNA at a time. Coordinated motions by a converter formed by DNA-disengaged RuvB subunits stimulates ATP hydrolysis and nucleotide exchange. Immobilization of the converter enables RuvB to convert the ATP-contained energy into a lever motion, pulling 2 nucleotides of DNA out of the RuvA tetramer per ATP hydrolyzed, thus driving DNA branch migration. The RuvB motors rotate together with the DNA substrate, which together with the progressing nucleotide cycle form the mechanistic basis for DNA recombination by continuous HJ branch migration. Branch migration allows RuvC to scan DNA until it finds its consensus sequence, where it cleaves and resolves cruciform DNA. The sequence is that of Holliday junction branch migration complex subunit RuvB from Thermosipho melanesiensis (strain DSM 12029 / CIP 104789 / BI429).